We begin with the raw amino-acid sequence, 323 residues long: 1D-myo-inositol 2-acetamido-2-deoxy-alpha-D-glucopyranoside deacetylase 1 (323 aa).

Positions 30, 33, and 165 each coordinate Zn(2+).

Belongs to the MshB deacetylase family. The cofactor is Zn(2+).

The catalysed reaction is 1D-myo-inositol 2-acetamido-2-deoxy-alpha-D-glucopyranoside + H2O = 1D-myo-inositol 2-amino-2-deoxy-alpha-D-glucopyranoside + acetate. Its function is as follows. Catalyzes the deacetylation of 1D-myo-inositol 2-acetamido-2-deoxy-alpha-D-glucopyranoside (GlcNAc-Ins) in the mycothiol biosynthesis pathway. The sequence is that of 1D-myo-inositol 2-acetamido-2-deoxy-alpha-D-glucopyranoside deacetylase 1 from Catenulispora acidiphila (strain DSM 44928 / JCM 14897 / NBRC 102108 / NRRL B-24433 / ID139908).